A 169-amino-acid chain; its full sequence is Transcription regulatory protein SNF11 (169 aa).

Positions 1 to 24 are disordered; the sequence is MSSEIAYSNTNTNTENENRNTGAG. S2 carries the post-translational modification N-acetylserine. A compositionally biased stretch (low complexity) spans 9 to 21; the sequence is NTNTNTENENRNT. Tandem repeats lie at residues 28–31, 32–35, 36–39, 40–43, 44–47, 48–51, 76–80, and 160–165. Residues 28 to 51 form a 6 X 4 AA tandem repeats of N-[AT]-[NT]-A region; it reads NTNANANANATANATANATANATA. The 2 X 5 AA repeats of L-L-A-R-V stretch occupies residues 76 to 165; it reads LLARVIQMNN…SKLYLLLARV (90 aa).

In terms of assembly, component of the SWI/SNF global transcription activator complex. The 1.14 MDa SWI/SNF complex is composed of 11 different subunits: one copy each of SWI1, SNF2/SWI2, SNF5, SNF12/SWP73, ARP7/SWP61, ARP9/SWP59; two copies each of SWI3, SNF6, SNF11, SWP82; and three copies of TAF14/SWP29.

The protein localises to the nucleus. Its function is as follows. Involved in transcriptional activation. Component of the SWI/SNF complex, an ATP-dependent chromatin remodeling complex, which is required for the positive and negative regulation of gene expression of a large number of genes. It changes chromatin structure by altering DNA-histone contacts within a nucleosome, leading eventually to a change in nucleosome position, thus facilitating or repressing binding of gene-specific transcription factors. This chain is Transcription regulatory protein SNF11 (SNF11), found in Saccharomyces cerevisiae (strain ATCC 204508 / S288c) (Baker's yeast).